The sequence spans 306 residues: 1-aminocyclopropane-1-carboxylate oxidase (306 aa).

The region spanning 153–253 (PFFGTKVSHY…RRSIASFYNP (101 aa)) is the Fe2OG dioxygenase domain. The Fe cation site is built by His-177, Asp-179, and His-234.

This sequence belongs to the iron/ascorbate-dependent oxidoreductase family. Requires Fe cation as cofactor.

It catalyses the reaction 1-aminocyclopropane-1-carboxylate + L-ascorbate + O2 = ethene + L-dehydroascorbate + hydrogen cyanide + CO2 + 2 H2O. It functions in the pathway alkene biosynthesis; ethylene biosynthesis via S-adenosyl-L-methionine; ethylene from S-adenosyl-L-methionine: step 2/2. The polypeptide is 1-aminocyclopropane-1-carboxylate oxidase (MAO1B) (Musa acuminata (Banana)).